Consider the following 110-residue polypeptide: Phosphoribosyl-ATP pyrophosphatase (110 aa).

The protein belongs to the PRA-PH family.

The protein localises to the cytoplasm. It carries out the reaction 1-(5-phospho-beta-D-ribosyl)-ATP + H2O = 1-(5-phospho-beta-D-ribosyl)-5'-AMP + diphosphate + H(+). The protein operates within amino-acid biosynthesis; L-histidine biosynthesis; L-histidine from 5-phospho-alpha-D-ribose 1-diphosphate: step 2/9. This chain is Phosphoribosyl-ATP pyrophosphatase, found in Pseudomonas savastanoi pv. phaseolicola (strain 1448A / Race 6) (Pseudomonas syringae pv. phaseolicola (strain 1448A / Race 6)).